A 143-amino-acid chain; its full sequence is uncharacterized protein (143 aa).

A run of 2 helical transmembrane segments spans residues 20–39 (FKYC…WITV) and 113–135 (YFSL…ITGL).

The protein localises to the membrane. This is an uncharacterized protein from Saccharomyces cerevisiae (strain ATCC 204508 / S288c) (Baker's yeast).